Reading from the N-terminus, the 202-residue chain is Heat shock 22 kDa protein, mitochondrial (202 aa).

The transit peptide at 1–31 (MASSLALKRFLSSGLLSSSFLRPVASSASRS) directs the protein to the mitochondrion. The sHSP domain maps to 94 to 202 (VLSAASRRGW…RNNVINVKVD (109 aa)).

Belongs to the small heat shock protein (HSP20) family.

The protein localises to the mitochondrion. The protein is Heat shock 22 kDa protein, mitochondrial (HSP22) of Pisum sativum (Garden pea).